Consider the following 281-residue polypeptide: Arylamine N-acetyltransferase / N-hydroxyarylamine O-acetyltransferase (281 aa).

Cysteine 69 (acyl-thioester intermediate) is an active-site residue. Active-site residues include histidine 107 and aspartate 122.

It belongs to the arylamine N-acetyltransferase family. Monomer and homodimer.

Its subcellular location is the cytoplasm. The catalysed reaction is an arylamine + acetyl-CoA = an N-acetylarylamine + CoA. The enzyme catalyses an N-hydroxyarylamine + acetyl-CoA = an N-acetoxyarylamine + CoA. Its activity is regulated as follows. Inhibited by N-ethylmaleimide and iodoacetamide. Catalyzes both the acetyl-CoA-dependent N-acetylation of aromatic amines and the O-acetylation of N-hydroxyarylamines. In vitro, catalyzes the O-acetylation of N-hydroxy-Glu-P-1, and the N-acetylation of isoniazid and 2-aminofluorene. The protein is Arylamine N-acetyltransferase / N-hydroxyarylamine O-acetyltransferase (nhoA) of Salmonella typhimurium (strain LT2 / SGSC1412 / ATCC 700720).